The primary structure comprises 664 residues: Intraflagellar transport protein 70B (664 aa).

7 TPR repeats span residues 11 to 44, 45 to 78, 153 to 186, 188 to 220, 385 to 418, 423 to 456, and 458 to 491; these read DGEF…SPRS, RAGL…HPEL, YDGQ…SGYQ, DISY…GIRQ, LTEQ…YDET, IPVL…CNDH, and VWKL…NYDN. The stretch at 507–534 forms a coiled coil; that stretch reads YIMTSQNEEAEELMRKIEKEEEQLSYDD. One copy of the TPR 8 repeat lies at 543-576; that stretch reads CIVNLVIGTLYCAKGNYDFGISRVIKSLEPYHKK.

The protein belongs to the TTC30/dfy-1/fleer family. In terms of assembly, interacts with the IFT B complex components IFT27, IFT46, IFT74, IFT52, IFT57, IFT80, IFT81 and IFT88. Interacts with KIF17.

The protein localises to the cell projection. It localises to the cilium. In terms of biological role, required for polyglutamylation of axonemal tubulin. Plays a role in anterograde intraflagellar transport (IFT), the process by which cilia precursors are transported from the base of the cilium to the site of their incorporation at the tip. This is Intraflagellar transport protein 70B (Ift70b) from Rattus norvegicus (Rat).